The chain runs to 230 residues: Large ribosomal subunit protein uL1 (230 aa).

It belongs to the universal ribosomal protein uL1 family. As to quaternary structure, part of the 50S ribosomal subunit.

In terms of biological role, binds directly to 23S rRNA. The L1 stalk is quite mobile in the ribosome, and is involved in E site tRNA release. Protein L1 is also a translational repressor protein, it controls the translation of the L11 operon by binding to its mRNA. This chain is Large ribosomal subunit protein uL1, found in Granulibacter bethesdensis (strain ATCC BAA-1260 / CGDNIH1).